The following is a 100-amino-acid chain: Nucleoid-associated protein Caur_0522 (100 aa).

The protein belongs to the YbaB/EbfC family. In terms of assembly, homodimer.

It localises to the cytoplasm. The protein localises to the nucleoid. Its function is as follows. Binds to DNA and alters its conformation. May be involved in regulation of gene expression, nucleoid organization and DNA protection. This is Nucleoid-associated protein Caur_0522 from Chloroflexus aurantiacus (strain ATCC 29366 / DSM 635 / J-10-fl).